The sequence spans 445 residues: Probable glycine dehydrogenase (decarboxylating) subunit 1 (445 aa).

This sequence belongs to the GcvP family. N-terminal subunit subfamily. As to quaternary structure, the glycine cleavage system is composed of four proteins: P, T, L and H. In this organism, the P 'protein' is a heterodimer of two subunits.

It carries out the reaction N(6)-[(R)-lipoyl]-L-lysyl-[glycine-cleavage complex H protein] + glycine + H(+) = N(6)-[(R)-S(8)-aminomethyldihydrolipoyl]-L-lysyl-[glycine-cleavage complex H protein] + CO2. Its function is as follows. The glycine cleavage system catalyzes the degradation of glycine. The P protein binds the alpha-amino group of glycine through its pyridoxal phosphate cofactor; CO(2) is released and the remaining methylamine moiety is then transferred to the lipoamide cofactor of the H protein. The protein is Probable glycine dehydrogenase (decarboxylating) subunit 1 of Chlorobium chlorochromatii (strain CaD3).